The chain runs to 444 residues: UDP-N-acetylmuramoylalanine--D-glutamate ligase (444 aa).

118–124 contacts ATP; it reads GTNGKTT.

The protein belongs to the MurCDEF family.

The protein localises to the cytoplasm. The enzyme catalyses UDP-N-acetyl-alpha-D-muramoyl-L-alanine + D-glutamate + ATP = UDP-N-acetyl-alpha-D-muramoyl-L-alanyl-D-glutamate + ADP + phosphate + H(+). The protein operates within cell wall biogenesis; peptidoglycan biosynthesis. Cell wall formation. Catalyzes the addition of glutamate to the nucleotide precursor UDP-N-acetylmuramoyl-L-alanine (UMA). This chain is UDP-N-acetylmuramoylalanine--D-glutamate ligase, found in Protochlamydia amoebophila (strain UWE25).